The sequence spans 254 residues: L-erythrulose-1-phosphate isomerase (254 aa).

The active-site Electrophile is the H97. E170 (proton acceptor) is an active-site residue. G176 and S213 together coordinate substrate.

It belongs to the triosephosphate isomerase family. In terms of assembly, homodimer.

It is found in the cytoplasm. The catalysed reaction is L-erythrulose 1-phosphate = D-erythrulose 4-phosphate. The protein operates within carbohydrate metabolism; erythritol degradation. Catalyzes the isomerization of D-erythrulose-4P to L-erythrulose-1P. This Mesorhizobium japonicum (strain LMG 29417 / CECT 9101 / MAFF 303099) (Mesorhizobium loti (strain MAFF 303099)) protein is L-erythrulose-1-phosphate isomerase.